A 287-amino-acid polypeptide reads, in one-letter code: MIQNEKKHLILYTGDVTKNLKSGIWNASRIKSNLELVKALENVKLTKFTGDGDENLKKNIKVLVPVNEKPQKLDGKQEEYEIIVKLFFLDGENIDIKKREETLSQVFYNLHMLFGIDFVSTLVVSFPHITFLKESGNSSSNEIYDSIDEIPPQEIQSWVDTWKLLEEKVGEGKIGTLGVSEFGVNELQRLISSVNVVPESTQINIGQNCKLPNDLLNFADRHHLKLFFHSDPSALLSESEITSVIHKACPEIPNPARVDWVIRYTILTRHTAVIHQKGYIVQSTYTE.

It belongs to the aldo/keto reductase family. Glutamate--cysteine ligase light chain subfamily. Heterodimer of a catalytic heavy chain and a regulatory light chain.

The protein resides in the cytoplasm. It functions in the pathway sulfur metabolism; glutathione biosynthesis; glutathione from L-cysteine and L-glutamate: step 1/2. The sequence is that of Putative glutamate--cysteine ligase regulatory subunit from Schizosaccharomyces pombe (strain 972 / ATCC 24843) (Fission yeast).